The sequence spans 202 residues: Large ribosomal subunit protein uL18 (202 aa).

It belongs to the universal ribosomal protein uL18 family. As to quaternary structure, part of the 50S ribosomal subunit. Contacts the 5S and 23S rRNAs.

In terms of biological role, this is one of the proteins that bind and probably mediate the attachment of the 5S RNA into the large ribosomal subunit, where it forms part of the central protuberance. The polypeptide is Large ribosomal subunit protein uL18 (Staphylothermus marinus (strain ATCC 43588 / DSM 3639 / JCM 9404 / F1)).